A 333-amino-acid chain; its full sequence is uncharacterized protein (333 aa).

This is an uncharacterized protein from Caenorhabditis elegans.